Reading from the N-terminus, the 212-residue chain is Interleukin-6 (212 aa).

The signal sequence occupies residues 1 to 29 (MNSFSTSAFGPVAFSLGLLLVLPAAFPAP). 2 cysteine pairs are disulfide-bonded: Cys-72–Cys-78 and Cys-101–Cys-111. Asn-73 is a glycosylation site (N-linked (GlcNAc...) asparagine). Asn-172 is a glycosylation site (N-linked (GlcNAc...) asparagine).

This sequence belongs to the IL-6 superfamily. As to quaternary structure, component of a hexamer of two molecules each of IL6, IL6R and IL6ST; first binds to IL6R to associate with the signaling subunit IL6ST. Interacts with IL6R (via the N-terminal ectodomain); this interaction may be affected by IL6R-binding with SORL1, hence decreasing IL6 cis signaling. Interacts with SORL1 (via the N-terminal ectodomain); this interaction leads to IL6 internalization and lysosomal degradation. May form a trimeric complex with the soluble SORL1 ectodomain and soluble IL6R receptor; this interaction might stabilize circulating IL6, hence promoting IL6 trans signaling.

It localises to the secreted. Cytokine with a wide variety of biological functions in immunity, tissue regeneration, and metabolism. Binds to IL6R, then the complex associates to the signaling subunit IL6ST/gp130 to trigger the intracellular IL6-signaling pathway. The interaction with the membrane-bound IL6R and IL6ST stimulates 'classic signaling', whereas the binding of IL6 and soluble IL6R to IL6ST stimulates 'trans-signaling'. Alternatively, 'cluster signaling' occurs when membrane-bound IL6:IL6R complexes on transmitter cells activate IL6ST receptors on neighboring receiver cells. Functionally, IL6 is a potent inducer of the acute phase response. Rapid production of IL6 contributes to host defense during infection and tissue injury, but excessive IL6 synthesis is involved in disease pathology. In the innate immune response, is synthesized by myeloid cells, such as macrophages and dendritic cells, upon recognition of pathogens through toll-like receptors (TLRs) at the site of infection or tissue injury. In the adaptive immune response, is required for the differentiation of B cells into immunoglobulin-secreting cells. Plays a major role in the differentiation of CD4(+) T cell subsets. Essential factor for the development of T follicular helper (Tfh) cells that are required for the induction of germinal-center formation. Required to drive naive CD4(+) T cells to the Th17 lineage. Also required for proliferation of myeloma cells and the survival of plasmablast cells. In terms of biological role, acts as an essential factor in bone homeostasis and on vessels directly or indirectly by induction of VEGF, resulting in increased angiogenesis activity and vascular permeability. Induces, through 'trans-signaling' and synergistically with IL1B and TNF, the production of VEGF. Involved in metabolic controls, is discharged into the bloodstream after muscle contraction increasing lipolysis and improving insulin resistance. 'Trans-signaling' in central nervous system also regulates energy and glucose homeostasis. Mediates, through GLP-1, crosstalk between insulin-sensitive tissues, intestinal L cells and pancreatic islets to adapt to changes in insulin demand. Also acts as a myokine. Plays a protective role during liver injury, being required for maintenance of tissue regeneration. Also has a pivotal role in iron metabolism by regulating HAMP/hepcidin expression upon inflammation or bacterial infection. Through activation of IL6ST-YAP-NOTCH pathway, induces inflammation-induced epithelial regeneration. In Cercocebus atys (Sooty mangabey), this protein is Interleukin-6 (IL6).